The chain runs to 708 residues: Elongation factor G (708 aa).

The 281-residue stretch at 9-289 (MFTRNIGIMA…AVCAFLPSPE (281 aa)) folds into the tr-type G domain. Residues 18 to 25 (AHIDAGKT), 86 to 90 (DTPGH), and 140 to 143 (NKMD) contribute to the GTP site.

This sequence belongs to the TRAFAC class translation factor GTPase superfamily. Classic translation factor GTPase family. EF-G/EF-2 subfamily.

Its subcellular location is the cytoplasm. Its function is as follows. Catalyzes the GTP-dependent ribosomal translocation step during translation elongation. During this step, the ribosome changes from the pre-translocational (PRE) to the post-translocational (POST) state as the newly formed A-site-bound peptidyl-tRNA and P-site-bound deacylated tRNA move to the P and E sites, respectively. Catalyzes the coordinated movement of the two tRNA molecules, the mRNA and conformational changes in the ribosome. The protein is Elongation factor G of Parabacteroides distasonis (strain ATCC 8503 / DSM 20701 / CIP 104284 / JCM 5825 / NCTC 11152).